Consider the following 377-residue polypeptide: Lipoyl synthase, mitochondrial (377 aa).

Residues cysteine 98, cysteine 103, cysteine 109, cysteine 128, cysteine 132, cysteine 135, and serine 343 each coordinate [4Fe-4S] cluster. One can recognise a Radical SAM core domain in the interval 113-332 (KKSEATATIM…RDTALDMGFL (220 aa)).

It belongs to the radical SAM superfamily. Lipoyl synthase family. Requires [4Fe-4S] cluster as cofactor.

It localises to the mitochondrion. It carries out the reaction [[Fe-S] cluster scaffold protein carrying a second [4Fe-4S](2+) cluster] + N(6)-octanoyl-L-lysyl-[protein] + 2 oxidized [2Fe-2S]-[ferredoxin] + 2 S-adenosyl-L-methionine + 4 H(+) = [[Fe-S] cluster scaffold protein] + N(6)-[(R)-dihydrolipoyl]-L-lysyl-[protein] + 4 Fe(3+) + 2 hydrogen sulfide + 2 5'-deoxyadenosine + 2 L-methionine + 2 reduced [2Fe-2S]-[ferredoxin]. It participates in protein modification; protein lipoylation via endogenous pathway; protein N(6)-(lipoyl)lysine from octanoyl-[acyl-carrier-protein]: step 2/2. Catalyzes the radical-mediated insertion of two sulfur atoms into the C-6 and C-8 positions of the octanoyl moiety bound to the lipoyl domains of lipoate-dependent enzymes, thereby converting the octanoylated domains into lipoylated derivatives. The protein is Lipoyl synthase, mitochondrial of Candida tropicalis (strain ATCC MYA-3404 / T1) (Yeast).